A 465-amino-acid chain; its full sequence is Putative multidrug resistance protein MdtD (465 aa).

13 consecutive transmembrane segments (helical) span residues 12–32, 49–69, 72–92, 102–124, 138–158, 165–185, 195–215, 219–239, 267–287, 290–310, 342–362, 393–413, and 430–450; these read LWIV…VNTA, SVIV…GWLA, IGVK…SLMC, ILSR…LTVM, FVTL…GFLV, WIFL…LLLM, FDIS…LALD, GLGL…IALG, LVGS…TPIF, IGLG…IIGS, LSLP…VLFF, LLSM…GILL, and SAFL…ALIF.

It belongs to the major facilitator superfamily. TCR/Tet family.

The protein localises to the cell inner membrane. This Yersinia pseudotuberculosis serotype O:1b (strain IP 31758) protein is Putative multidrug resistance protein MdtD.